Reading from the N-terminus, the 597-residue chain is Protein GRISEA (597 aa).

The copper-fist DNA-binding region spans 1–41 (MPIINGQKMACGPCIRGHRSTKCNHYNERVMVPVRKPGRPL). Residues cysteine 11, cysteine 14, cysteine 23, and histidine 25 each coordinate Zn(2+). Disordered stretches follow at residues 70–115 (PAGT…ASRR), 233–352 (AFVD…PGFG), 407–428 (SRPP…NGNN), and 467–541 (SPNS…SPAL). A compositionally biased stretch (polar residues) spans 92-103 (SPASRTSSNRVT). Low complexity predominate over residues 104-115 (KSGSGSKSASRR). Residues 269–281 (GGSGGGGCCGGGK) are compositionally biased toward gly residues. Pro residues predominate over residues 287 to 314 (QAPPPVPAPLPTPPQQQMPNIMPPPQPQ). Residues 469–495 (NSSHGNSGSADSSANASPSANPLNLAS) show a composition bias toward low complexity. Residues 521–530 (ANESDGSSNA) show a composition bias toward polar residues.

It localises to the nucleus. Copper-sensing transcription factor that regulates copper uptake by transactivation of Ctr3, a high affinity copper permease. Binds to the palindromic UAS sequence 5'-TGTTGCTCANNNNAGAGCAACT-3'. Also transactivates Sod2, a mitochondrial manganese superoxide dismutase through the palindromic UAS sequence 5'-GTTTGCTCA-3' with 352 bp separating the two inverted repeats. Loss of function indirectly leads to rearrangement of mitochondrial DNA associated with senescence in wild-type strains. The sequence is that of Protein GRISEA from Podospora anserina (Pleurage anserina).